A 1809-amino-acid chain; its full sequence is Stereocilin (1809 aa).

The first 22 residues, 1-22, serve as a signal peptide directing secretion; it reads MALSLQPQLLLLLSLLPQEVTS. N-linked (GlcNAc...) asparagine glycosylation is found at N63, N200, N295, N352, and N364. Residues 376–426 form a disordered region; sequence PATPRPPPTTPRPPPTTPQPPPTTTQPIPDTTQPPPVTPRPPPTTPQPPPS. Pro residues-rich tracts occupy residues 378–399 and 407–426; these read TPRPPPTTPRPPPTTPQPPPTT and TQPPPVTPRPPPTTPQPPPS. N-linked (GlcNAc...) asparagine glycans are attached at residues N467, N516, N580, N605, N696, N860, N952, N1000, N1213, and N1308.

It belongs to the stereocilin family. As to expression, strongly expressed in the inner ear, detected in the testis, and barely detected in the eye. Detected in the six sensory areas of the inner ear by immunofluorescence. Expressed only in the sensory hair cells and associated with the stereocilia, the stiff microvilli forming the structure for mechanoreception of sound stimulation.

Its subcellular location is the cell surface. The protein resides in the cell projection. It localises to the kinocilium. The protein localises to the stereocilium. Its function is as follows. Essential to the formation of horizontal top connectors between outer hair cell stereocilia. In Mus musculus (Mouse), this protein is Stereocilin (Strc).